A 1023-amino-acid chain; its full sequence is FHIP family protein AGAP011705 (1023 aa).

Polar residues-rich tracts occupy residues 1–13, 806–825, and 868–888; these read MSWL…RQSF, SMTS…SSSY, and GLNH…ASMN. Disordered stretches follow at residues 1–39 and 797–927; these read MSWL…AGGG and GKLL…AETQ. Residues 889 to 906 are compositionally biased toward low complexity; it reads VPSPVGQQQHQHQSVSSV.

This sequence belongs to the FHIP family.

The protein is FHIP family protein AGAP011705 of Anopheles gambiae (African malaria mosquito).